A 426-amino-acid chain; its full sequence is Putative F-box/LRR-repeat protein At4g15060 (426 aa).

The region spanning 25-71 (MDKISRLPDDLLVKVLLFLPTKIAVSTSILSKRWEFLWMWLPKLEYH) is the F-box domain. LRR repeat units follow at residues 50-75 (STSI…NTNY), 80-106 (EQRL…RLKF), 160-187 (ILKL…LLKR), 188-213 (VTYK…VVER), 221-259 (TLSI…KLTD), 265-290 (ETEL…HIDS), 311-337 (CVKV…KLCP), 338-363 (CDSN…EIKL), and 373-399 (DPAC…TWTW).

This chain is Putative F-box/LRR-repeat protein At4g15060, found in Arabidopsis thaliana (Mouse-ear cress).